The sequence spans 115 residues: Large ribosomal subunit protein bL19 (115 aa).

This sequence belongs to the bacterial ribosomal protein bL19 family.

Functionally, this protein is located at the 30S-50S ribosomal subunit interface and may play a role in the structure and function of the aminoacyl-tRNA binding site. The chain is Large ribosomal subunit protein bL19 from Lactobacillus acidophilus (strain ATCC 700396 / NCK56 / N2 / NCFM).